We begin with the raw amino-acid sequence, 293 residues long: Elongation factor Ts (293 aa).

An involved in Mg(2+) ion dislocation from EF-Tu region spans residues 80–83 (TDFV).

Belongs to the EF-Ts family.

It localises to the cytoplasm. Associates with the EF-Tu.GDP complex and induces the exchange of GDP to GTP. It remains bound to the aminoacyl-tRNA.EF-Tu.GTP complex up to the GTP hydrolysis stage on the ribosome. This chain is Elongation factor Ts, found in Paraburkholderia xenovorans (strain LB400).